Here is a 378-residue protein sequence, read N- to C-terminus: Flagellin E (378 aa).

Coiled-coil stretches lie at residues 98 to 139 and 311 to 339; these read QSAN…KLLN and MQNRFQHAISNLDNVHENLAASNSRIKDA.

It belongs to the bacterial flagellin family. Heteromer of multiple flagellin subunits including FlaA, FlaB, FlaC, FlaD and FlaE.

It localises to the secreted. It is found in the bacterial flagellum. Its function is as follows. Flagellin is the subunit protein which polymerizes to form the filaments of bacterial flagella. FlaE is not essential for flagellar synthesis and motility. This is Flagellin E (flaE) from Vibrio cholerae serotype O1 (strain ATCC 39541 / Classical Ogawa 395 / O395).